Here is a 149-residue protein sequence, read N- to C-terminus: Protein FAM72A (149 aa).

The protein belongs to the FAM72 family. In terms of assembly, interacts with UNG. In terms of tissue distribution, expressed at high levels in stomach and also in kidney and, at low levels, in heart (at protein level). In the stomach, highly expressed in foveolar cells, parietal cells and chief cells (at protein level). In kidney, expressed in endothelial cells, mesangial and epithelial cells (parietal and visceral epithelium) around glomerulus (at protein level).

The protein resides in the cytoplasm. It localises to the mitochondrion. Its function is as follows. May play a role in the regulation of cellular reactive oxygen species metabolism. May participate in cell growth regulation. The protein is Protein FAM72A (Fam72a) of Rattus norvegicus (Rat).